Here is a 167-residue protein sequence, read N- to C-terminus: Ribosome maturation factor RimM (167 aa).

The 72-residue stretch at 94-165 folds into the PRC barrel domain; the sequence is ENEFYYSDII…KIIITPMEGL (72 aa).

Belongs to the RimM family. Binds ribosomal protein uS19.

It localises to the cytoplasm. Functionally, an accessory protein needed during the final step in the assembly of 30S ribosomal subunit, possibly for assembly of the head region. Essential for efficient processing of 16S rRNA. May be needed both before and after RbfA during the maturation of 16S rRNA. It has affinity for free ribosomal 30S subunits but not for 70S ribosomes. This is Ribosome maturation factor RimM from Staphylococcus aureus (strain Mu3 / ATCC 700698).